Reading from the N-terminus, the 1082-residue chain is RE1-silencing transcription factor (1082 aa).

The interaction with SIN3A stretch occupies residues 32–117; that stretch reads DLHELSKAEL…SLELSAVEPQ (86 aa). Residues 43 to 57 are interaction with SIN3B; it reads APQLIMLANVALTGE. Residues 140–413 are interaction with ZFP90; the sequence is PVAEDKCRSS…KSKHPTCPSK (274 aa). Residues 154–176 form a C2H2-type 1 zinc finger; the sequence is FRCKPCQYEAESEEQFVHHIRIH. Residues 196-207 are required for binding to the neuron-restrictive silencer element; sequence SGSSPAEEGEFS. 7 C2H2-type zinc fingers span residues 211–235, 243–265, 271–293, 299–321, 327–350, 356–378, and 384–407; these read IRCDRCGYNTNRYDHYMAHLKHHLR, YKCIICTYTTVSEYHWRKHLRNH, YTCSKCNYFSDRKNNYVQHVRTH, YKCELCPYSSSQKTHLTRHMRTH, FKCDQCNYVASNQHEVTRHARQVH, LNCPHCDYKTADRSNFKKHVELH, and FNCPVCDYAASKKCNLQYHFKSKH. Disordered regions lie at residues 408–809 and 831–1027; these read PTCP…ELSL and SKLL…KAGL. Residues 440-475 are compositionally biased toward basic and acidic residues; that stretch reads EKMENEQTKTKGDVSGKKNEKPVKAVGKDASKEKKP. The span at 477–497 shows a compositional bias: low complexity; it reads SSVSVVQVTTRTRKSAVAAET. Positions 581-597 are enriched in basic residues; it reads KGTKKTPPKTKTSKKGG. Positions 630–640 are enriched in polar residues; that stretch reads VTGSGSSQTEL. 2 stretches are compositionally biased toward pro residues: residues 684-713 and 729-751; these read YPQPPQRGPAPPTGPAPPTGPAPPTEPAPP and KEPPPSMEPPCPEELPQAEPPPM. Composition is skewed to basic and acidic residues over residues 798–807 and 854–864; these read LRKDRAEKEL and NSREETPKDQE. The segment covering 900 to 909 has biased composition (polar residues); sequence RVSSSEQNSA. Serine 950 carries the post-translational modification Phosphoserine. Residues 985–1063 form an interaction with RCOR1 region; sequence EGIHSHDGSD…HLNRHLVNVY (79 aa). The segment at 1036 to 1058 adopts a C2H2-type 9 zinc-finger fold; it reads FVCIFCDRSFRKEKDYSKHLNRH.

As to quaternary structure, isoform 1 and isoform 2 form heterodimers. Isoform 2: Forms homodimers and homooligomers; binds to the neuron-restrictive silencer element (NRSE) as monomer. Interacts with SIN3A, SIN3B and RCOR1. Interacts with CDYL. Interacts with EHMT1 and EHMT2 only in the presence of CDYL. Part of a complex containing at least CDYL, REST, WIZ, SETB1, EHMT1 and EHMT2. Interacts (via zinc-finger DNA-binding domain) with ZFP90 (via N- and C-termini); the interaction inhibits REST repressor activity. Interacts (via C2H2-type zinc finger 5) with PRICKLE1. Interacts with FBXW11 and BTRC. Interacts with USP7. In terms of processing, O-glycosylated. Phosphorylated; phosphorylation is required for ubiquitination. Post-translationally, ubiquitinated; ubiquitination is mediated by BTRC and leads to proteasomal degradation in G2 phase. Ubiquitination increases during neuronal differentiation. Deubiquitinated by USP7; leading to its stabilization and promoting the maintenance of neural progenitor cells. Expressed in the hippocampus, including quiescent neuronal progenitor (QNP) cells, transient-amplifying progenitor (TAP) cells, neuroblasts and mature neurons (at protein level). Expressed in embryonic stem cells (at protein level). Expressed in many non-neuronal tissues including the heart and liver. Abundantly expressed in osteoblastic lineage cells. Expressed in the spleen, kidney, blood cells, cortex, neocortex and in the utricle, saccule and organ of Corti of the inner ear. Isoform 2: Expressed in the cortex, neocortex and in the utricle, saccule and organ of Corti of the inner ear.

The protein resides in the nucleus. The protein localises to the cytoplasm. Its function is as follows. Transcriptional repressor which binds neuron-restrictive silencer element (NRSE) and represses neuronal gene transcription in non-neuronal cells. Restricts the expression of neuronal genes by associating with two distinct corepressors, SIN3A and RCOR1, which in turn recruit histone deacetylase to the promoters of REST-regulated genes. Mediates repression by recruiting the BHC complex at RE1/NRSE sites which acts by deacetylating and demethylating specific sites on histones, thereby acting as a chromatin modifier. Transcriptional repression by REST-CDYL via the recruitment of histone methyltransferase EHMT2 may be important in transformation suppression. Represses the expression of SRRM4 in non-neural cells to prevent the activation of neural-specific splicing events and to prevent production of REST isoform 2. Repressor activity may be inhibited by forming heterodimers with isoform 2, thereby preventing binding to NRSE or binding to corepressors and leading to derepression of target genes. Also maintains repression of neuronal genes in neural stem cells, and allows transcription and differentiation into neurons by dissociation from RE1/NRSE sites of target genes. Thereby is involved in maintaining the quiescent state of adult neural stem cells and preventing premature differentiation into mature neurons. Plays a role in the developmental switch in synaptic NMDA receptor composition during postnatal development, by repressing GRIN2B expression and thereby altering NMDA receptor properties from containing primarily GRIN2B to primarily GRIN2A subunits. Acts as a regulator of osteoblast differentiation. Key repressor of gene expression in hypoxia; represses genes in hypoxia by direct binding to an RE1/NRSE site on their promoter regions. May also function in stress resistance in the brain during aging; possibly by regulating expression of genes involved in cell death and in the stress response. Repressor of gene expression in the hippocampus after ischemia by directly binding to RE1/NRSE sites and recruiting SIN3A and RCOR1 to promoters of target genes, thereby promoting changes in chromatin modifications and ischemia-induced cell death. After ischemia, might play a role in repression of miR-132 expression in hippocampal neurons, thereby leading to neuronal cell death. Binds to the 3' region of the neuron-restrictive silencer element (NRSE), with lower affinity than isoform 1. Exhibits weaker repressor activity compared to isoform 1. May negatively regulate the repressor activity of isoform 1 by binding to isoform 1, thereby preventing its binding to NRSE and leading to derepression of target genes. However, in another study, does not appear to be implicated in repressor activity of a NRSE motif-containing reporter construct nor in inhibitory activity on the isoform 1 transcriptional repressor activity. Post-transcriptional inactivation of REST by SRRM4-dependent alternative splicing into isoform 2 is required in mechanosensory hair cells in the inner ear for derepression of neuronal genes, maintenance of hair cells and hearing. In Mus musculus (Mouse), this protein is RE1-silencing transcription factor (Rest).